The primary structure comprises 443 residues: Nuclear hormone receptor family member nhr-60 (443 aa).

Positions 1–20 are enriched in low complexity; sequence MIQSSSSISQDSLDLPSILS. Positions 1 to 40 are disordered; it reads MIQSSSSISQDSLDLPSILSTFSADEPEDEPSPTAVKSTK. The nuclear receptor DNA-binding region spans 44 to 121; that stretch reads PTECLICGNS…VGMNPLAMEV (78 aa). 2 consecutive NR C4-type zinc fingers follow at residues 47–67 and 83–104; these read CLIC…CNGC and CKAK…CRAC. The NR LBD domain occupies 196–439; the sequence is NEFSGLEYLL…KDLVMRVIED (244 aa). Residues 225–249 form a disordered region; it reads LRRDQLGPPRLPKPPSPGKPRDSQH. The segment covering 233–242 has biased composition (pro residues); it reads PRLPKPPSPG.

The protein belongs to the nuclear hormone receptor family.

The protein localises to the nucleus. Its function is as follows. Orphan nuclear receptor (Potential). Required for embryonic and larval morphogenesis and probably for seam cell positioning and migration. This chain is Nuclear hormone receptor family member nhr-60, found in Caenorhabditis elegans.